The primary structure comprises 196 residues: Large ribosomal subunit protein bL9 (196 aa).

The protein belongs to the bacterial ribosomal protein bL9 family.

Binds to the 23S rRNA. The chain is Large ribosomal subunit protein bL9 from Gluconobacter oxydans (strain 621H) (Gluconobacter suboxydans).